We begin with the raw amino-acid sequence, 491 residues long: Glycogen synthase 2 (491 aa).

Lysine 16 contacts ADP-alpha-D-glucose.

Belongs to the glycosyltransferase 1 family. Bacterial/plant glycogen synthase subfamily.

The catalysed reaction is [(1-&gt;4)-alpha-D-glucosyl](n) + ADP-alpha-D-glucose = [(1-&gt;4)-alpha-D-glucosyl](n+1) + ADP + H(+). It functions in the pathway glycan biosynthesis; glycogen biosynthesis. Functionally, synthesizes alpha-1,4-glucan chains using ADP-glucose. This chain is Glycogen synthase 2, found in Nitrosococcus oceani (strain ATCC 19707 / BCRC 17464 / JCM 30415 / NCIMB 11848 / C-107).